The primary structure comprises 520 residues: MIRRIRTLTPLLVLACAGSGAWASKKAFNIQDDLLAYPQFQVFFPDEYILDARARELLQNQQESSSASADKTFSEGNDAQVYLGSRKDQSEDVNKETIEGSGFTYEEMLLEGQRYLCSIPQVDNGNRDQTNGAESTSKEDEQREIARATDRGLELLREMEGKCMYYISGWWSYSFCYKKQIKQFHALPSGPGVPNYPPIEDSTTHSFVLGRFPNSGDDEDLEGDAEHKKTTTDVAELQTKGGSRYLVQRLGGGTKCDLTGKDRKIEVQFHCHPQSTDRIGWIKELTTCSYLMVIYTPRLCNDVAFLPPQQDEAHAIECREILSEEEVSDWEANREYHLAQQLVESAITPEFPVVGDIEVGAHKWVGSEGKQIEKGRVASIGEEKIEVVAKRQNGEITRLSKEELKKYGLDPEKIETLKSRLEELAKGKDWTLEIVESNGERGLVGTVDSNDDEKEDHAAQGSISQPAQGTTADKGESNAETGEEKKKADEKIDHYEPEKSGPTTDDADDGSEEIFFKDEL.

A signal peptide spans 1–23 (MIRRIRTLTPLLVLACAGSGAWA). Positions 121–135 (QVDNGNRDQTNGAES) are enriched in polar residues. Residues 121–144 (QVDNGNRDQTNGAESTSKEDEQRE) are disordered. An MRH domain is found at 161–302 (GKCMYYISGW…VIYTPRLCND (142 aa)). A disulfide bridge links Cys163 with Cys176. A mannooligosaccharide derivative-binding residues include Trp170, Trp171, Gln183, Asp257, Arg263, Glu284, and Tyr290. Intrachain disulfides connect Cys256–Cys288 and Cys271–Cys300. The interval 442 to 520 (GLVGTVDSND…SEEIFFKDEL (79 aa)) is disordered. A compositionally biased stretch (polar residues) spans 461–471 (GSISQPAQGTT). Residues 473 to 499 (DKGESNAETGEEKKKADEKIDHYEPEK) are compositionally biased toward basic and acidic residues. Residues 517-520 (KDEL) carry the Prevents secretion from ER motif.

This sequence belongs to the OS-9 family. Interacts with missfolded ER lumenal proteins.

Its subcellular location is the endoplasmic reticulum membrane. Its function is as follows. Lectin involved in the quality control of the secretory pathway. As a member of the endoplasmic reticulum-associated degradation lumenal (ERAD-L) surveillance system, targets misfolded endoplasmic reticulum lumenal glycoproteins for degradation. The polypeptide is Protein OS-9 homolog (yos9) (Aspergillus fumigatus (strain ATCC MYA-4609 / CBS 101355 / FGSC A1100 / Af293) (Neosartorya fumigata)).